The sequence spans 806 residues: Acetyl-CoA decarbonylase/synthase complex subunit alpha 1 (806 aa).

[4Fe-4S] cluster contacts are provided by Cys73, Cys76, Cys77, Cys79, Cys84, and Cys94. His117 contacts CO. Positions 250, 278, and 323 each coordinate [Ni-4Fe-4S] cluster. 4Fe-4S ferredoxin-type domains lie at 407-436 (DEQM…IPEA) and 445-475 (YSYL…LSVI). Residues Cys417, Cys420, Cys423, Cys427, Cys455, Cys458, Cys461, and Cys465 each contribute to the [4Fe-4S] cluster site. [Ni-4Fe-4S] cluster contacts are provided by Cys523, Cys552, and Cys587.

The protein belongs to the Ni-containing carbon monoxide dehydrogenase family. As to quaternary structure, heterotetramer of two alpha and two epsilon subunits. The ACDS complex is made up of alpha, epsilon, beta, gamma and delta subunits with a probable stoichiometry of (alpha(2)epsilon(2))(4)-beta(8)-(gamma(1)delta(1))(8). [4Fe-4S] cluster serves as cofactor. [Ni-4Fe-4S] cluster is required as a cofactor.

It catalyses the reaction CO + 2 oxidized [2Fe-2S]-[ferredoxin] + H2O = 2 reduced [2Fe-2S]-[ferredoxin] + CO2 + 2 H(+). It functions in the pathway one-carbon metabolism; methanogenesis from acetate. Its function is as follows. Part of the ACDS complex that catalyzes the reversible cleavage of acetyl-CoA, allowing growth on acetate as sole source of carbon and energy. The alpha-epsilon subcomponent functions as a carbon monoxide dehydrogenase. The protein is Acetyl-CoA decarbonylase/synthase complex subunit alpha 1 of Methanosarcina thermophila.